Reading from the N-terminus, the 620-residue chain is 1-deoxy-D-xylulose-5-phosphate synthase (620 aa).

Thiamine diphosphate-binding positions include His-80 and 121-123 (GHS). Asp-152 lines the Mg(2+) pocket. Residues 153–154 (GA), Asn-181, Tyr-288, and Glu-370 contribute to the thiamine diphosphate site. Position 181 (Asn-181) interacts with Mg(2+).

This sequence belongs to the transketolase family. DXPS subfamily. In terms of assembly, homodimer. It depends on Mg(2+) as a cofactor. Requires thiamine diphosphate as cofactor.

It catalyses the reaction D-glyceraldehyde 3-phosphate + pyruvate + H(+) = 1-deoxy-D-xylulose 5-phosphate + CO2. It participates in metabolic intermediate biosynthesis; 1-deoxy-D-xylulose 5-phosphate biosynthesis; 1-deoxy-D-xylulose 5-phosphate from D-glyceraldehyde 3-phosphate and pyruvate: step 1/1. Its function is as follows. Catalyzes the acyloin condensation reaction between C atoms 2 and 3 of pyruvate and glyceraldehyde 3-phosphate to yield 1-deoxy-D-xylulose-5-phosphate (DXP). The sequence is that of 1-deoxy-D-xylulose-5-phosphate synthase from Salmonella choleraesuis (strain SC-B67).